A 185-amino-acid chain; its full sequence is Putative sulfur carrier protein YrkF (185 aa).

Residue Cys15 is the Cysteine persulfide intermediate of the active site. The region spanning 101–185 is the Rhodanese domain; that stretch reads SDESLNILDV…GMRDWTGKTE (85 aa).

It belongs to the sulfur carrier protein TusA family.

This is Putative sulfur carrier protein YrkF (yrkF) from Bacillus subtilis (strain 168).